The sequence spans 121 residues: NADH-quinone oxidoreductase subunit A 1 (121 aa).

A run of 3 helical transmembrane segments spans residues 6 to 26 (FPIFVVISIAIILAVVLLSIG), 62 to 82 (LVAMIFIVFDIEVIFMYPWAV), and 90 to 110 (FYGLIPMVTFVLILLAGYYYI).

Belongs to the complex I subunit 3 family. In terms of assembly, NDH-1 is composed of 14 different subunits. Subunits NuoA, H, J, K, L, M, N constitute the membrane sector of the complex.

The protein resides in the cell inner membrane. It catalyses the reaction a quinone + NADH + 5 H(+)(in) = a quinol + NAD(+) + 4 H(+)(out). Its function is as follows. NDH-1 shuttles electrons from NADH, via FMN and iron-sulfur (Fe-S) centers, to quinones in the respiratory chain. The immediate electron acceptor for the enzyme in this species is believed to be a menaquinone. Couples the redox reaction to proton translocation (for every two electrons transferred, four hydrogen ions are translocated across the cytoplasmic membrane), and thus conserves the redox energy in a proton gradient. The protein is NADH-quinone oxidoreductase subunit A 1 of Chloroherpeton thalassium (strain ATCC 35110 / GB-78).